The chain runs to 413 residues: Tyrosine--tRNA ligase (413 aa).

The short motif at 59-68 is the 'HIGH' region element; the sequence is PTAPDIHLGH. The 'KMSKS' region motif lies at 243–247; it reads KMSKS. An ATP-binding site is contributed by Lys246. The region spanning 351-411 is the S4 RNA-binding domain; sequence LAIGQLLKQA…GKRRFARVTL (61 aa).

This sequence belongs to the class-I aminoacyl-tRNA synthetase family. TyrS type 2 subfamily. Homodimer.

Its subcellular location is the cytoplasm. The catalysed reaction is tRNA(Tyr) + L-tyrosine + ATP = L-tyrosyl-tRNA(Tyr) + AMP + diphosphate + H(+). Catalyzes the attachment of tyrosine to tRNA(Tyr) in a two-step reaction: tyrosine is first activated by ATP to form Tyr-AMP and then transferred to the acceptor end of tRNA(Tyr). This chain is Tyrosine--tRNA ligase, found in Burkholderia pseudomallei (strain 1710b).